We begin with the raw amino-acid sequence, 307 residues long: Protein FAM76A (307 aa).

Disordered regions lie at residues Gln-142–Thr-195 and Lys-287–Pro-307. Over residues Ser-161–Asn-182 the composition is skewed to polar residues. The stretch at Ile-217–Glu-299 forms a coiled coil.

It belongs to the FAM76 family.

The sequence is that of Protein FAM76A (FAM76A) from Bos taurus (Bovine).